The chain runs to 215 residues: Probable phosphoglycerate mutase GpmB (215 aa).

Substrate contacts are provided by residues 8 to 15 (RHGETQWN), 21 to 22 (QG), Arg-58, Lys-60, 82 to 85 (ELDM), 104 to 105 (RR), and 151 to 152 (GI). His-9 (tele-phosphohistidine intermediate) is an active-site residue. Glu-82 functions as the Proton donor/acceptor in the catalytic mechanism.

The protein belongs to the phosphoglycerate mutase family. GpmB subfamily.

It carries out the reaction (2R)-2-phosphoglycerate = (2R)-3-phosphoglycerate. It functions in the pathway carbohydrate degradation; glycolysis; pyruvate from D-glyceraldehyde 3-phosphate: step 3/5. The sequence is that of Probable phosphoglycerate mutase GpmB from Salmonella typhi.